Consider the following 337-residue polypeptide: tRNA N6-adenosine threonylcarbamoyltransferase (337 aa).

2 residues coordinate Fe cation: His111 and His115. Substrate-binding positions include 134–138 (LVSGG), Asp167, Gly180, and Asn272. Asp300 is a binding site for Fe cation.

Belongs to the KAE1 / TsaD family. Requires Fe(2+) as cofactor.

The protein resides in the cytoplasm. The enzyme catalyses L-threonylcarbamoyladenylate + adenosine(37) in tRNA = N(6)-L-threonylcarbamoyladenosine(37) in tRNA + AMP + H(+). Functionally, required for the formation of a threonylcarbamoyl group on adenosine at position 37 (t(6)A37) in tRNAs that read codons beginning with adenine. Is involved in the transfer of the threonylcarbamoyl moiety of threonylcarbamoyl-AMP (TC-AMP) to the N6 group of A37, together with TsaE and TsaB. TsaD likely plays a direct catalytic role in this reaction. In Escherichia coli O157:H7, this protein is tRNA N6-adenosine threonylcarbamoyltransferase.